We begin with the raw amino-acid sequence, 138 residues long: RutC family protein UK114 (138 aa).

This sequence belongs to the RutC family.

Functionally, molecular chaperone. Seems to fulfill an ATP-independent, HSP70-like function in protein folding. May protect essential factors of cell proliferation during heat shock. No role in calpain activation. This is RutC family protein UK114 from Drosophila melanogaster (Fruit fly).